Here is a 293-residue protein sequence, read N- to C-terminus: UPF0282 protein MK0213 (293 aa).

This sequence belongs to the UPF0282 family.

The sequence is that of UPF0282 protein MK0213 from Methanopyrus kandleri (strain AV19 / DSM 6324 / JCM 9639 / NBRC 100938).